Consider the following 427-residue polypeptide: Adenylosuccinate synthetase (427 aa).

GTP contacts are provided by residues 12-18 (GDEGKGK) and 40-42 (GHT). D13 acts as the Proton acceptor in catalysis. D13 and G40 together coordinate Mg(2+). IMP is bound by residues 13 to 16 (DEGK), 38 to 41 (NAGH), T130, R144, Q224, T239, and R303. Catalysis depends on H41, which acts as the Proton donor. 299–305 (VTTGRAR) contributes to the substrate binding site. Residues R305, 331–333 (KID), and 413–415 (SVG) each bind GTP.

It belongs to the adenylosuccinate synthetase family. Homodimer. Mg(2+) is required as a cofactor.

It localises to the cytoplasm. It catalyses the reaction IMP + L-aspartate + GTP = N(6)-(1,2-dicarboxyethyl)-AMP + GDP + phosphate + 2 H(+). It functions in the pathway purine metabolism; AMP biosynthesis via de novo pathway; AMP from IMP: step 1/2. Plays an important role in the de novo pathway of purine nucleotide biosynthesis. Catalyzes the first committed step in the biosynthesis of AMP from IMP. This Clostridium novyi (strain NT) protein is Adenylosuccinate synthetase.